The following is a 381-amino-acid chain: Queuine tRNA-ribosyltransferase (381 aa).

Residue Asp92 is the Proton acceptor of the active site. Substrate-binding positions include 92-96 (DSGGF), Asp146, Gln190, and Gly217. The RNA binding stretch occupies residues 248–254 (GVGRPED). Asp267 serves as the catalytic Nucleophile. Residues 272–276 (TRNAR) are RNA binding; important for wobble base 34 recognition. Residues Cys305, Cys307, Cys310, and His337 each coordinate Zn(2+).

The protein belongs to the queuine tRNA-ribosyltransferase family. Homodimer. Within each dimer, one monomer is responsible for RNA recognition and catalysis, while the other monomer binds to the replacement base PreQ1. Zn(2+) serves as cofactor.

The enzyme catalyses 7-aminomethyl-7-carbaguanine + guanosine(34) in tRNA = 7-aminomethyl-7-carbaguanosine(34) in tRNA + guanine. The protein operates within tRNA modification; tRNA-queuosine biosynthesis. In terms of biological role, catalyzes the base-exchange of a guanine (G) residue with the queuine precursor 7-aminomethyl-7-deazaguanine (PreQ1) at position 34 (anticodon wobble position) in tRNAs with GU(N) anticodons (tRNA-Asp, -Asn, -His and -Tyr). Catalysis occurs through a double-displacement mechanism. The nucleophile active site attacks the C1' of nucleotide 34 to detach the guanine base from the RNA, forming a covalent enzyme-RNA intermediate. The proton acceptor active site deprotonates the incoming PreQ1, allowing a nucleophilic attack on the C1' of the ribose to form the product. After dissociation, two additional enzymatic reactions on the tRNA convert PreQ1 to queuine (Q), resulting in the hypermodified nucleoside queuosine (7-(((4,5-cis-dihydroxy-2-cyclopenten-1-yl)amino)methyl)-7-deazaguanosine). This chain is Queuine tRNA-ribosyltransferase, found in Xanthomonas axonopodis pv. citri (strain 306).